The primary structure comprises 114 residues: UPF0060 membrane protein GDI3492/Gdia_2889 (114 aa).

4 consecutive transmembrane segments (helical) span residues 8-28 (FAVY…WWCW), 35-55 (AWVL…LTLV), 64-84 (FAAY…LVEG), and 92-112 (AAGV…GRGA).

It belongs to the UPF0060 family.

The protein resides in the cell inner membrane. The chain is UPF0060 membrane protein GDI3492/Gdia_2889 from Gluconacetobacter diazotrophicus (strain ATCC 49037 / DSM 5601 / CCUG 37298 / CIP 103539 / LMG 7603 / PAl5).